The chain runs to 435 residues: Serine--tRNA ligase (435 aa).

Thr241–Glu243 serves as a coordination point for L-serine. Arg272 to Glu274 is a binding site for ATP. Glu295 contacts L-serine. ATP is bound at residue Glu359–Ser362. An L-serine-binding site is contributed by Ser395.

Belongs to the class-II aminoacyl-tRNA synthetase family. Type-1 seryl-tRNA synthetase subfamily. As to quaternary structure, homodimer. The tRNA molecule binds across the dimer.

The protein localises to the cytoplasm. It catalyses the reaction tRNA(Ser) + L-serine + ATP = L-seryl-tRNA(Ser) + AMP + diphosphate + H(+). It carries out the reaction tRNA(Sec) + L-serine + ATP = L-seryl-tRNA(Sec) + AMP + diphosphate + H(+). It participates in aminoacyl-tRNA biosynthesis; selenocysteinyl-tRNA(Sec) biosynthesis; L-seryl-tRNA(Sec) from L-serine and tRNA(Sec): step 1/1. Functionally, catalyzes the attachment of serine to tRNA(Ser). Is also able to aminoacylate tRNA(Sec) with serine, to form the misacylated tRNA L-seryl-tRNA(Sec), which will be further converted into selenocysteinyl-tRNA(Sec). The sequence is that of Serine--tRNA ligase from Actinobacillus pleuropneumoniae serotype 7 (strain AP76).